A 479-amino-acid polypeptide reads, in one-letter code: Type I inositol polyphosphate 5-phosphatase 8 (479 aa).

2 catalytic regions span residues 300–315 (DKVIWLGDLNYRLRAS) and 379–394 (KRRTPAWCDRILWKGD).

The protein belongs to the inositol polyphosphate 5-phosphatase family.

This chain is Type I inositol polyphosphate 5-phosphatase 8, found in Arabidopsis thaliana (Mouse-ear cress).